The following is a 465-amino-acid chain: Siroheme synthase (465 aa).

The precorrin-2 dehydrogenase /sirohydrochlorin ferrochelatase stretch occupies residues 1 to 203; the sequence is MDFLPLFHSL…GRPAEAERLL (203 aa). NAD(+) is bound by residues 22–23 and 43–44; these read EV and PQ. Ser128 carries the phosphoserine modification. A uroporphyrinogen-III C-methyltransferase region spans residues 217–465; sequence GEVYLVGAGP…AWFEGAREGA (249 aa). Residue Pro226 coordinates S-adenosyl-L-methionine. Asp249 (proton acceptor) is an active-site residue. Lys271 serves as the catalytic Proton donor. S-adenosyl-L-methionine-binding positions include 302 to 304, Ile307, 332 to 333, Met384, and Gly413; these read GGD and TA.

The protein in the N-terminal section; belongs to the precorrin-2 dehydrogenase / sirohydrochlorin ferrochelatase family. This sequence in the C-terminal section; belongs to the precorrin methyltransferase family.

The catalysed reaction is uroporphyrinogen III + 2 S-adenosyl-L-methionine = precorrin-2 + 2 S-adenosyl-L-homocysteine + H(+). It carries out the reaction precorrin-2 + NAD(+) = sirohydrochlorin + NADH + 2 H(+). The enzyme catalyses siroheme + 2 H(+) = sirohydrochlorin + Fe(2+). Its pathway is cofactor biosynthesis; adenosylcobalamin biosynthesis; precorrin-2 from uroporphyrinogen III: step 1/1. The protein operates within cofactor biosynthesis; adenosylcobalamin biosynthesis; sirohydrochlorin from precorrin-2: step 1/1. It functions in the pathway porphyrin-containing compound metabolism; siroheme biosynthesis; precorrin-2 from uroporphyrinogen III: step 1/1. It participates in porphyrin-containing compound metabolism; siroheme biosynthesis; siroheme from sirohydrochlorin: step 1/1. Its pathway is porphyrin-containing compound metabolism; siroheme biosynthesis; sirohydrochlorin from precorrin-2: step 1/1. Functionally, multifunctional enzyme that catalyzes the SAM-dependent methylations of uroporphyrinogen III at position C-2 and C-7 to form precorrin-2 via precorrin-1. Then it catalyzes the NAD-dependent ring dehydrogenation of precorrin-2 to yield sirohydrochlorin. Finally, it catalyzes the ferrochelation of sirohydrochlorin to yield siroheme. The chain is Siroheme synthase from Pseudomonas paraeruginosa (strain DSM 24068 / PA7) (Pseudomonas aeruginosa (strain PA7)).